The chain runs to 204 residues: Small ribosomal subunit protein uS4 (204 aa).

Positions 1-46 are disordered; that stretch reads MSKRHSSKYKIDRRMGENIWGRPKSPVNRREYGPGQHGQRRRSKIS. The 64-residue stretch at 94–157 folds into the S4 RNA-binding domain; sequence RRLDMIVYRA…QEMALVLEAQ (64 aa).

The protein belongs to the universal ribosomal protein uS4 family. Part of the 30S ribosomal subunit. Contacts protein S5. The interaction surface between S4 and S5 is involved in control of translational fidelity.

Its function is as follows. One of the primary rRNA binding proteins, it binds directly to 16S rRNA where it nucleates assembly of the body of the 30S subunit. Functionally, with S5 and S12 plays an important role in translational accuracy. The polypeptide is Small ribosomal subunit protein uS4 (Zymomonas mobilis subsp. mobilis (strain ATCC 31821 / ZM4 / CP4)).